Consider the following 431-residue polypeptide: 23S rRNA (uracil(1939)-C(5))-methyltransferase RlmD (431 aa).

Residues 10 to 68 form the TRAM domain; sequence RVTTRQIITVKVNDLDSFGQGVARHNGKALFIPGLLPEESAEVIITEDKKQFARARVSR. [4Fe-4S] cluster contacts are provided by Cys81, Cys87, Cys90, and Cys161. S-adenosyl-L-methionine-binding residues include Gln264, Phe293, Asn298, Glu314, Asn341, and Asp362. The active-site Nucleophile is the Cys388.

Belongs to the class I-like SAM-binding methyltransferase superfamily. RNA M5U methyltransferase family. RlmD subfamily.

The catalysed reaction is uridine(1939) in 23S rRNA + S-adenosyl-L-methionine = 5-methyluridine(1939) in 23S rRNA + S-adenosyl-L-homocysteine + H(+). In terms of biological role, catalyzes the formation of 5-methyl-uridine at position 1939 (m5U1939) in 23S rRNA. This Salmonella paratyphi A (strain ATCC 9150 / SARB42) protein is 23S rRNA (uracil(1939)-C(5))-methyltransferase RlmD.